The following is a 434-amino-acid chain: ATP-dependent protease ATPase subunit HslU (434 aa).

Residues Ile18, 60 to 65, Asp247, Glu312, and Arg384 each bind ATP; that span reads GVGKTE.

The protein belongs to the ClpX chaperone family. HslU subfamily. A double ring-shaped homohexamer of HslV is capped on each side by a ring-shaped HslU homohexamer. The assembly of the HslU/HslV complex is dependent on binding of ATP.

The protein resides in the cytoplasm. Its function is as follows. ATPase subunit of a proteasome-like degradation complex; this subunit has chaperone activity. The binding of ATP and its subsequent hydrolysis by HslU are essential for unfolding of protein substrates subsequently hydrolyzed by HslV. HslU recognizes the N-terminal part of its protein substrates and unfolds these before they are guided to HslV for hydrolysis. The sequence is that of ATP-dependent protease ATPase subunit HslU from Brucella anthropi (strain ATCC 49188 / DSM 6882 / CCUG 24695 / JCM 21032 / LMG 3331 / NBRC 15819 / NCTC 12168 / Alc 37) (Ochrobactrum anthropi).